The sequence spans 284 residues: Bifunctional protein FolD (284 aa).

Residues 166–168 (GAS) and I232 contribute to the NADP(+) site.

Belongs to the tetrahydrofolate dehydrogenase/cyclohydrolase family. Homodimer.

It carries out the reaction (6R)-5,10-methylene-5,6,7,8-tetrahydrofolate + NADP(+) = (6R)-5,10-methenyltetrahydrofolate + NADPH. The enzyme catalyses (6R)-5,10-methenyltetrahydrofolate + H2O = (6R)-10-formyltetrahydrofolate + H(+). It participates in one-carbon metabolism; tetrahydrofolate interconversion. In terms of biological role, catalyzes the oxidation of 5,10-methylenetetrahydrofolate to 5,10-methenyltetrahydrofolate and then the hydrolysis of 5,10-methenyltetrahydrofolate to 10-formyltetrahydrofolate. The polypeptide is Bifunctional protein FolD (Tolumonas auensis (strain DSM 9187 / NBRC 110442 / TA 4)).